We begin with the raw amino-acid sequence, 294 residues long: Elongation factor Ts (294 aa).

The segment at 80-83 is involved in Mg(2+) ion dislocation from EF-Tu; that stretch reads TDFV.

The protein belongs to the EF-Ts family.

Its subcellular location is the cytoplasm. Its function is as follows. Associates with the EF-Tu.GDP complex and induces the exchange of GDP to GTP. It remains bound to the aminoacyl-tRNA.EF-Tu.GTP complex up to the GTP hydrolysis stage on the ribosome. This Listeria innocua serovar 6a (strain ATCC BAA-680 / CLIP 11262) protein is Elongation factor Ts.